Here is a 340-residue protein sequence, read N- to C-terminus: Ketol-acid reductoisomerase (NADP(+)) (340 aa).

The region spanning 1–183 is the KARI N-terminal Rossmann domain; it reads MAVTVYYDKD…GAGRTGIIET (183 aa). NADP(+) is bound by residues 26–29, K49, S54, and 84–87; these read FGSQ and DELQ. Residue H109 is part of the active site. Position 135 (G135) interacts with NADP(+). The KARI C-terminal knotted domain maps to 184–329; the sequence is TFKDETETDL…EKLRAMMPWI (146 aa). Mg(2+) is bound by residues D192, E196, E228, and E232. S253 is a substrate binding site.

The protein belongs to the ketol-acid reductoisomerase family. Requires Mg(2+) as cofactor.

It carries out the reaction (2R)-2,3-dihydroxy-3-methylbutanoate + NADP(+) = (2S)-2-acetolactate + NADPH + H(+). It catalyses the reaction (2R,3R)-2,3-dihydroxy-3-methylpentanoate + NADP(+) = (S)-2-ethyl-2-hydroxy-3-oxobutanoate + NADPH + H(+). It participates in amino-acid biosynthesis; L-isoleucine biosynthesis; L-isoleucine from 2-oxobutanoate: step 2/4. Its pathway is amino-acid biosynthesis; L-valine biosynthesis; L-valine from pyruvate: step 2/4. In terms of biological role, involved in the biosynthesis of branched-chain amino acids (BCAA). Catalyzes an alkyl-migration followed by a ketol-acid reduction of (S)-2-acetolactate (S2AL) to yield (R)-2,3-dihydroxy-isovalerate. In the isomerase reaction, S2AL is rearranged via a Mg-dependent methyl migration to produce 3-hydroxy-3-methyl-2-ketobutyrate (HMKB). In the reductase reaction, this 2-ketoacid undergoes a metal-dependent reduction by NADPH to yield (R)-2,3-dihydroxy-isovalerate. This is Ketol-acid reductoisomerase (NADP(+)) from Campylobacter hominis (strain ATCC BAA-381 / DSM 21671 / CCUG 45161 / LMG 19568 / NCTC 13146 / CH001A).